The sequence spans 1323 residues: Lysine-specific demethylase 3A (1323 aa).

Disordered regions lie at residues 255–287, 307–337, and 385–416; these read TRTGAVKRKSSENNGSSVSKQAKSCSEASPSMC, ATPSSKDPRQQNTPQAANSPPNIGAKLPQGC, and SEPKGSCIQPKTNTDQESRLESAPQPVTGLPK. Ser264 is subject to Phosphoserine. 2 stretches are compositionally biased toward polar residues: residues 266-283 and 307-327; these read ENNGSSVSKQAKSCSEAS and ATPSSKDPRQQNTPQAANSPP. At Ser325 the chain carries Phosphoserine. A Phosphoserine modification is found at Ser446. Disordered regions lie at residues 468–487 and 495–517; these read AEKKVEPSHLGSQSQNLKET and SCCTRSSNKTQTPPARKSVLTDP. 2 stretches are compositionally biased toward polar residues: residues 477-486 and 495-507; these read LGSQSQNLKE and SCCTRSSNKTQTP. A C6-type zinc finger spans residues 662-687; it reads CDVCDTTIFNLHWVCPRCGFGVCVDC. Positions 885 to 889 match the LXXLL motif motif; it reads LRNLL. Lys895 carries the post-translational modification N6-acetyllysine. Residues 1060 to 1283 enclose the JmjC domain; the sequence is MPSRFDDLMA…HCFWLTQEFR (224 aa). His1122, Asp1124, and His1251 together coordinate Fe cation.

This sequence belongs to the JHDM2 histone demethylase family. As to quaternary structure, interacts with VRK1. The cofactor is Fe(2+). Highly expressed in testis (at protein level). Also expressed at high levels in tissues responsive to sympathetic nerve activity such as brown adipose tissue and skeletal muscle.

The protein resides in the cytoplasm. It localises to the nucleus. It carries out the reaction N(6),N(6)-dimethyl-L-lysyl(9)-[histone H3] + 2 2-oxoglutarate + 2 O2 = L-lysyl(9)-[histone H3] + 2 formaldehyde + 2 succinate + 2 CO2. Its function is as follows. Histone demethylase that specifically demethylates 'Lys-9' of histone H3, thereby playing a central role in histone code. Preferentially demethylates mono- and dimethylated H3 'Lys-9' residue, with a preference for dimethylated residue, while it has weak or no activity on trimethylated H3 'Lys-9'. Demethylation of Lys residue generates formaldehyde and succinate. Involved in hormone-dependent transcriptional activation, by participating in recruitment to androgen-receptor target genes, resulting in H3 'Lys-9' demethylation and transcriptional activation. Involved in spermatogenesis by regulating expression of target genes such as PRM1 and TNP1 which are required for packaging and condensation of sperm chromatin. Involved in obesity resistance through regulation of metabolic genes such as PPARA and UCP1. The sequence is that of Lysine-specific demethylase 3A (Kdm3a) from Mus musculus (Mouse).